We begin with the raw amino-acid sequence, 204 residues long: uncharacterized protein (204 aa).

This is an uncharacterized protein from Methanocaldococcus jannaschii (strain ATCC 43067 / DSM 2661 / JAL-1 / JCM 10045 / NBRC 100440) (Methanococcus jannaschii).